Reading from the N-terminus, the 374-residue chain is Eukaryotic translation initiation factor 3 subunit M (374 aa).

Residues 180 to 339 (TAAKVMVELL…RKVVVSHSTH (160 aa)) form the PCI domain.

The protein belongs to the eIF-3 subunit M family. Component of the eukaryotic translation initiation factor 3 (eIF-3) complex, which is composed of 13 subunits: EIF3A, EIF3B, EIF3C, EIF3D, EIF3E, EIF3F, EIF3G, EIF3H, EIF3I, EIF3J, EIF3K, EIF3L and EIF3M.

It is found in the cytoplasm. Functionally, component of the eukaryotic translation initiation factor 3 (eIF-3) complex, which is involved in protein synthesis of a specialized repertoire of mRNAs and, together with other initiation factors, stimulates binding of mRNA and methionyl-tRNAi to the 40S ribosome. The eIF-3 complex specifically targets and initiates translation of a subset of mRNAs involved in cell proliferation. In Gallus gallus (Chicken), this protein is Eukaryotic translation initiation factor 3 subunit M.